A 63-amino-acid chain; its full sequence is Conotoxin Cl14.11 (63 aa).

The N-terminal stretch at 1–21 (MRFLLLLTVALLLTCIMETDA) is a signal peptide. A propeptide spanning residues 22–34 (EAKPEDLAERFRE) is cleaved from the precursor.

In terms of processing, contains 2 disulfide bond. In terms of tissue distribution, expressed by the venom duct.

Its subcellular location is the secreted. The polypeptide is Conotoxin Cl14.11 (Californiconus californicus (California cone)).